The following is a 152-amino-acid chain: SsrA-binding protein (152 aa).

It belongs to the SmpB family.

The protein localises to the cytoplasm. In terms of biological role, required for rescue of stalled ribosomes mediated by trans-translation. Binds to transfer-messenger RNA (tmRNA), required for stable association of tmRNA with ribosomes. tmRNA and SmpB together mimic tRNA shape, replacing the anticodon stem-loop with SmpB. tmRNA is encoded by the ssrA gene; the 2 termini fold to resemble tRNA(Ala) and it encodes a 'tag peptide', a short internal open reading frame. During trans-translation Ala-aminoacylated tmRNA acts like a tRNA, entering the A-site of stalled ribosomes, displacing the stalled mRNA. The ribosome then switches to translate the ORF on the tmRNA; the nascent peptide is terminated with the 'tag peptide' encoded by the tmRNA and targeted for degradation. The ribosome is freed to recommence translation, which seems to be the essential function of trans-translation. This Helicobacter pylori (strain Shi470) protein is SsrA-binding protein.